Consider the following 250-residue polypeptide: Proteasome subunit alpha type-4 (250 aa).

Belongs to the peptidase T1A family. The 26S proteasome consists of a 20S proteasome core and two 19S regulatory subunits. The 20S proteasome core is composed of 28 subunits that are arranged in four stacked rings, resulting in a barrel-shaped structure. The two end rings are each formed by seven alpha subunits, and the two central rings are each formed by seven beta subunits. The catalytic chamber with the active sites is on the inside of the barrel.

Its subcellular location is the cytoplasm. The protein localises to the nucleus. In terms of biological role, the proteasome is a multicatalytic proteinase complex which is characterized by its ability to cleave peptides with Arg, Phe, Tyr, Leu, and Glu adjacent to the leaving group at neutral or slightly basic pH. The proteasome has an ATP-dependent proteolytic activity. The polypeptide is Proteasome subunit alpha type-4 (psmA4) (Dictyostelium discoideum (Social amoeba)).